The primary structure comprises 157 residues: Ribosome maturation factor RimP (157 aa).

It belongs to the RimP family.

It is found in the cytoplasm. In terms of biological role, required for maturation of 30S ribosomal subunits. This is Ribosome maturation factor RimP from Geobacillus sp. (strain WCH70).